A 626-amino-acid polypeptide reads, in one-letter code: Zinc finger protein 471 (626 aa).

In terms of domain architecture, KRAB spans 14-85 (VTFKDVAIDF…TSEMTRSPFS (72 aa)). 15 C2H2-type zinc fingers span residues 206–228 (FKCN…FRIH), 234–256 (YACE…HRTH), 262–284 (FECK…QRIH), 290–312 (YKCK…QRIH), 318–340 (YECK…QRCH), 346–369 (YECI…RSYH), 375–397 (FNCI…RRIH), 403–425 (YKCG…QRIH), 431–453 (YECD…QRVH), 459–481 (YECK…LRIH), 487–509 (YECK…QRIH), 515–537 (YECI…QKTH), 543–565 (YECN…QRIH), 571–593 (YKCT…QRLH), and 599–621 (YQCF…QRSH).

The protein belongs to the krueppel C2H2-type zinc-finger protein family.

It is found in the nucleus. In terms of biological role, may be involved in transcriptional regulation. The polypeptide is Zinc finger protein 471 (ZNF471) (Homo sapiens (Human)).